Consider the following 441-residue polypeptide: 3-phosphoshikimate 1-carboxyvinyltransferase (441 aa).

Lys26, Ser27, and Arg31 together coordinate 3-phosphoshikimate. Lys26 contacts phosphoenolpyruvate. Phosphoenolpyruvate-binding residues include Gly99 and Arg127. 3-phosphoshikimate contacts are provided by Ser173, Ser174, Gln175, Ser203, Asp320, and Lys347. Residue Gln175 coordinates phosphoenolpyruvate. The active-site Proton acceptor is Asp320. Phosphoenolpyruvate is bound by residues Arg351, Arg393, and Lys423.

This sequence belongs to the EPSP synthase family. In terms of assembly, monomer.

The protein localises to the cytoplasm. The enzyme catalyses 3-phosphoshikimate + phosphoenolpyruvate = 5-O-(1-carboxyvinyl)-3-phosphoshikimate + phosphate. It participates in metabolic intermediate biosynthesis; chorismate biosynthesis; chorismate from D-erythrose 4-phosphate and phosphoenolpyruvate: step 6/7. In terms of biological role, catalyzes the transfer of the enolpyruvyl moiety of phosphoenolpyruvate (PEP) to the 5-hydroxyl of shikimate-3-phosphate (S3P) to produce enolpyruvyl shikimate-3-phosphate and inorganic phosphate. The sequence is that of 3-phosphoshikimate 1-carboxyvinyltransferase from Janthinobacterium sp. (strain Marseille) (Minibacterium massiliensis).